Here is a 1151-residue protein sequence, read N- to C-terminus: Chromosome partition protein Smc (1151 aa).

32-39 is a binding site for ATP; it reads PNGCGKSN. Coiled-coil stretches lie at residues 170 to 218, 342 to 379, 407 to 508, and 633 to 994; these read ISGL…AARY, IGRL…ALGE, DSRT…REAQ, and LKQL…EGRE. Basic and acidic residues-rich tracts occupy residues 421-438 and 465-480; these read RARE…RAAE and DEAR…EARA. Disordered stretches follow at residues 421-483, 806-826, and 862-889; these read RARE…AQRS, SAEL…AAEA, and LRAA…AEAR. Residues 866 to 889 show a composition bias toward basic and acidic residues; it reads QEAEREAERQAGESREARARAEAR.

This sequence belongs to the SMC family. Homodimer.

The protein localises to the cytoplasm. In terms of biological role, required for chromosome condensation and partitioning. This is Chromosome partition protein Smc from Cereibacter sphaeroides (strain ATCC 17029 / ATH 2.4.9) (Rhodobacter sphaeroides).